The following is a 334-amino-acid chain: Chorismatase (334 aa).

Y143, R150, Y203, and R216 together coordinate substrate. Catalysis depends on E328, which acts as the Proton acceptor.

Belongs to the FkbO/Hyg5 family. In terms of assembly, monomer.

It catalyses the reaction chorismate + H2O = (3R,4R)-3,4-dihydroxy-3,4-dihydrobenzoate + pyruvate. Involved in the biosynthesis of the macrocyclic amino acid-linked polyketides rapamycin which is a potent immunosuppressant that prevents T-cell proliferation through initial binding to the immunophilin FKBP12. Catalyzes the hydrolysis of chorismate via a 1,4-conjugate elimination of water to yield (4R,5R)-4,5-dihydroxycyclohexa-1,5-dienecarboxylic acid (DCDC). The chain is Chorismatase (rapK) from Streptomyces rapamycinicus (strain ATCC 29253 / DSM 41530 / NRRL 5491 / AYB-994) (Streptomyces hygroscopicus (strain ATCC 29253)).